Here is a 506-residue protein sequence, read N- to C-terminus: 2,3-bisphosphoglycerate-independent phosphoglycerate mutase (506 aa).

Positions 13 and 63 each coordinate Mn(2+). Ser63 functions as the Phosphoserine intermediate in the catalytic mechanism. Substrate contacts are provided by residues His124, 153–154, Arg183, Arg189, 254–257, and Lys330; these read RD and RADR. 5 residues coordinate Mn(2+): Asp396, His400, Asp437, His438, and His456.

The protein belongs to the BPG-independent phosphoglycerate mutase family. Monomer. Mn(2+) is required as a cofactor.

The enzyme catalyses (2R)-2-phosphoglycerate = (2R)-3-phosphoglycerate. It functions in the pathway carbohydrate degradation; glycolysis; pyruvate from D-glyceraldehyde 3-phosphate: step 3/5. Its function is as follows. Catalyzes the interconversion of 2-phosphoglycerate and 3-phosphoglycerate. This chain is 2,3-bisphosphoglycerate-independent phosphoglycerate mutase, found in Cereibacter sphaeroides (strain ATCC 17023 / DSM 158 / JCM 6121 / CCUG 31486 / LMG 2827 / NBRC 12203 / NCIMB 8253 / ATH 2.4.1.) (Rhodobacter sphaeroides).